A 514-amino-acid polypeptide reads, in one-letter code: Na(+)/H(+) antiporter NhaB (514 aa).

The next 12 helical transmembrane spans lie at 23 to 43, 63 to 83, 97 to 117, 120 to 140, 144 to 164, 202 to 222, 238 to 258, 303 to 323, 357 to 377, 391 to 411, 447 to 467, and 475 to 495; these read LALLVFLIINPFIFLANPFIA, PLLPGGLLAIEAVIIGMTSAA, LLLMFMVAGIYFMKQLLLFIF, LLLSIRSKMVLSLAFCVAAAF, FLDALTVVAVVISVAVGFYGI, LMMHAGVGTALGGVMTMVGEP, FFLRMSPVTVPVLVCGLLTCM, AIIGVWLVTALALHLAEVGLI, LTVFFSIVAVIIDQHLFAPII, LFYLFNGLLSSISDNVFVGTI, ATPNGQAAFLFLLTSALAPLI, and VWMALPYTIVLTLIGLLCVEF.

Belongs to the NhaB Na(+)/H(+) (TC 2.A.34) antiporter family.

The protein resides in the cell inner membrane. The enzyme catalyses 2 Na(+)(in) + 3 H(+)(out) = 2 Na(+)(out) + 3 H(+)(in). Na(+)/H(+) antiporter that extrudes sodium in exchange for external protons. This is Na(+)/H(+) antiporter NhaB from Salmonella paratyphi B (strain ATCC BAA-1250 / SPB7).